A 192-amino-acid polypeptide reads, in one-letter code: Thymidine kinase (192 aa).

ATP-binding positions include 9–16 (SAMNAGKS) and 87–90 (DECQ). E88 serves as the catalytic Proton acceptor. Residues C145, C147, C182, and H185 each coordinate Zn(2+).

Belongs to the thymidine kinase family. Homotetramer.

It localises to the cytoplasm. The enzyme catalyses thymidine + ATP = dTMP + ADP + H(+). The chain is Thymidine kinase from Photobacterium profundum (strain SS9).